Reading from the N-terminus, the 552-residue chain is Glycosyltransferase family 92 protein RCOM_0530710 (552 aa).

Residues 12–34 (WNRFFWCTLLLVLSCVLFTASTF) traverse the membrane as a helical; Signal-anchor segment. The 244-residue stretch at 277 to 520 (KPHEMCICTM…GTRAVEPPDW (244 aa)) folds into the GT92 domain.

It belongs to the glycosyltransferase 92 family.

It localises to the membrane. The sequence is that of Glycosyltransferase family 92 protein RCOM_0530710 from Ricinus communis (Castor bean).